Consider the following 431-residue polypeptide: Serine/threonine-protein kinase Sgk1 (431 aa).

The segment at 1-60 (MTVKTEAARGPLTYSRMRGMVAILIAFMKQRRMGLNDFIQKIANNSYACKHTEVQSILKI) is necessary for localization to the mitochondria. The interval 66–92 (PELMNANPSPPPSPSQQINLGPSSNPH) is disordered. At S74 the chain carries Phosphoserine. S78 bears the Phosphoserine; by MAPK7 mark. The span at 81 to 91 (QQINLGPSSNP) shows a compositional bias: polar residues. The Protein kinase domain occupies 98-355 (FHFLKVIGKG…FMEIRNHVFF (258 aa)). ATP contacts are provided by residues 104 to 112 (IGKGSFGKV) and K127. The Nuclear localization signal signature appears at 131 to 141 (KKAILKKKEEK). D222 (proton acceptor) is an active-site residue. T256 carries the phosphothreonine; by PDPK1 modification. The region spanning 356 to 431 (SLINWDDLIN…SYAPPMDSFL (76 aa)) is the AGC-kinase C-terminal domain. Phosphothreonine; by PKA is present on T369. 3 positions are modified to phosphoserine: S397, S401, and S422.

The protein belongs to the protein kinase superfamily. AGC Ser/Thr protein kinase family. In terms of assembly, homodimer; disulfide-linked. Forms a trimeric complex with FBXW7 and NOTCH1. Interacts with MAPK3/ERK1, MAPK1/ERK2, MAP2K1/MEK1, MAP2K2/MEK2, NEDD4, NEDD4L, MAPT/TAU, MAPK7, CREB1, SLC9A3R2/NHERF2 and KCNJ1/ROMK1. Associates with the mammalian target of rapamycin complex 2 (mTORC2) via an interaction with MAPKAP1/SIN1. Regulated by phosphorylation. Activated by phosphorylation on Ser-422 by mTORC2, transforming it into a substrate for PDPK1 which phosphorylates it on Thr-256. Phosphorylation on Ser-397 and Ser-401 are also essential for its activity. Phosphorylation on Ser-78 by MAPK7 is required for growth factor-induced cell cycle progression. In terms of processing, ubiquitinated by NEDD4L; which promotes proteasomal degradation. Ubiquitinated by SYVN1 at the endoplasmic reticulum; which promotes rapid proteasomal degradation and maintains a high turnover rate in resting cells.

The protein resides in the cytoplasm. Its subcellular location is the nucleus. It is found in the endoplasmic reticulum membrane. The protein localises to the cell membrane. It localises to the mitochondrion. The catalysed reaction is L-seryl-[protein] + ATP = O-phospho-L-seryl-[protein] + ADP + H(+). The enzyme catalyses L-threonyl-[protein] + ATP = O-phospho-L-threonyl-[protein] + ADP + H(+). Its activity is regulated as follows. Two specific sites, one in the kinase domain (Thr-256) and the other in the C-terminal regulatory region (Ser-422), need to be phosphorylated for its full activation. Phosphorylation at Ser-397 and Ser-401 are also essential for its activity. Activated by WNK1, WNK2, WNK3 and WNK4; which promote phosphorylation by mTORC2. Serine/threonine-protein kinase which is involved in the regulation of a wide variety of ion channels, membrane transporters, cellular enzymes, transcription factors, neuronal excitability, cell growth, proliferation, survival, migration and apoptosis. Plays an important role in cellular stress response. Contributes to regulation of renal Na(+) retention, renal K(+) elimination, salt appetite, gastric acid secretion, intestinal Na(+)/H(+) exchange and nutrient transport, insulin-dependent salt sensitivity of blood pressure, salt sensitivity of peripheral glucose uptake, cardiac repolarization and memory consolidation. Up-regulates Na(+) channels: SCNN1A/ENAC, SCN5A and ASIC1/ACCN2, K(+) channels: KCNJ1/ROMK1, KCNA1-5, KCNQ1-5 and KCNE1, epithelial Ca(2+) channels: TRPV5 and TRPV6, chloride channels: BSND, CLCN2 and CFTR, glutamate transporters: SLC1A3/EAAT1, SLC1A2 /EAAT2, SLC1A1/EAAT3, SLC1A6/EAAT4 and SLC1A7/EAAT5, amino acid transporters: SLC1A5/ASCT2, SLC38A1/SN1 and SLC6A19, creatine transporter: SLC6A8, Na(+)/dicarboxylate cotransporter: SLC13A2/NADC1, Na(+)-dependent phosphate cotransporter: SLC34A2/NAPI-2B, glutamate receptor: GRIK2/GLUR6. Up-regulates carriers: SLC9A3/NHE3, SLC12A1/NKCC2, SLC12A3/NCC, SLC5A3/SMIT, SLC2A1/GLUT1, SLC5A1/SGLT1 and SLC15A2/PEPT2. Regulates enzymes: GSK3A/B, PMM2 and Na(+)/K(+) ATPase, and transcription factors: CTNNB1 and nuclear factor NF-kappa-B. Stimulates sodium transport into epithelial cells by enhancing the stability and expression of SCNN1A/ENAC. This is achieved by phosphorylating the NEDD4L ubiquitin E3 ligase, promoting its interaction with 14-3-3 proteins, thereby preventing it from binding to SCNN1A/ENAC and targeting it for degradation. Regulates store-operated Ca(+2) entry (SOCE) by stimulating ORAI1 and STIM1. Regulates KCNJ1/ROMK1 directly via its phosphorylation or indirectly via increased interaction with SLC9A3R2/NHERF2. Phosphorylates MDM2 and activates MDM2-dependent ubiquitination of p53/TP53. Phosphorylates MAPT/TAU and mediates microtubule depolymerization and neurite formation in hippocampal neurons. Phosphorylates SLC2A4/GLUT4 and up-regulates its activity. Phosphorylates APBB1/FE65 and promotes its localization to the nucleus. Phosphorylates MAPK1/ERK2 and activates it by enhancing its interaction with MAP2K1/MEK1 and MAP2K2/MEK2. Phosphorylates FBXW7 and plays an inhibitory role in the NOTCH1 signaling. Phosphorylates FOXO1 resulting in its relocalization from the nucleus to the cytoplasm. Phosphorylates FOXO3, promoting its exit from the nucleus and interference with FOXO3-dependent transcription. Phosphorylates BRAF and MAP3K3/MEKK3 and inhibits their activity. Phosphorylates SLC9A3/NHE3 in response to dexamethasone, resulting in its activation and increased localization at the cell membrane. Phosphorylates CREB1. Necessary for vascular remodeling during angiogenesis. The sequence is that of Serine/threonine-protein kinase Sgk1 (SGK1) from Oryctolagus cuniculus (Rabbit).